Consider the following 8799-residue polypeptide: Nesprin-1 (8799 aa).

The tract at residues 1–289 is actin-binding; sequence MATSRASSRS…TQYPDIHGAG (289 aa). At 1–8748 the chain is on the cytoplasmic side; the sequence is MATSRASSRS…GRAFLFRILR (8748 aa). Calponin-homology (CH) domains follow at residues 27 to 134 and 178 to 283; these read IVQK…LYFQ and GNAK…TQYP. Spectrin repeat units follow at residues 314-397, 398-502, 503-609, 610-703, 704-815, 816-923, 924-1024, 1025-1122, 1123-1246, 1247-1333, 1334-1442, 1443-1548, 1549-1651, 1652-1761, 1762-1877, 1878-1974, 1975-2079, 2080-2193, 2194-2301, 2302-2399, 2400-2511, 2512-2617, 2618-2729, 2730-2836, 2837-2960, 2961-3060, 3061-3169, 3170-3273, 3274-3385, 3386-3488, 3489-3591, 3592-3718, 3719-3812, 3813-3918, 3919-4026, 4027-4137, 4138-4233, 4234-4337, 4338-4449, 4450-4558, 4559-4667, 4668-4774, 4775-4880, 4881-4989, 4990-5097, 5098-5207, 5208-5316, 5317-5422, 5423-5520, 5521-5628, 5629-5745, and 5746-5851; these read RDDR…SRLF, DWHI…HLMK, MEFL…SMLE, EVIS…YARA, DEMD…QLTV, PLEE…KHVE, ANSR…HLKI, AVEK…LVDD, PDKW…SSLE, GLIS…ERRI, QVSL…MEMV, KSKW…ILGH, LSQQ…LEDL, LARW…LQSV, LAEH…SHAC, MSTL…ADAL, VALK…QGQC, CGLI…LRVS, LSIW…KDFT, AQRT…QTQA, RIQD…LQDC, VSEL…LRSC, QLAL…LESV, IDQW…VEDL, VKDH…FGQV, TQLE…QNKE, QILQ…LENL, KIQM…VSRL, DRII…LEGA, LSKW…LEKL, VRLH…RMQL, NNVV…YSDW, YGST…LEKG, LHLA…LEAK, VKDH…QRVY, RSLE…KSLK, AELW…REQD, LQRT…IQVS, VTNL…LNKA, LSEK…LEKS, LVSR…TQEA, ILAR…LEDT, TSVY…CESR, MVQS…LTEI, YSRC…LQRC, MVQW…LEDA, VDEW…GKLV, KQEL…EEGK, AMSQ…LSKL, NQAL…LQDA, AKDM…PKEA, and VVQY…PSAH. The stretch at 314 to 8666 forms a coiled coil; sequence RDDRLILKET…DLEKLLDMSS (8353 aa). Phosphoserine is present on Lys-377. Ser-732 carries the post-translational modification Phosphoserine. Positions 1288-1310 are disordered; sequence KKRDLQEQMEQAQQGGQAGPGQE. At Thr-2268 the chain carries Phosphothreonine. Residue Ser-5655 is modified to Phosphoserine. The disordered stretch occupies residues 5868–5894; the sequence is PVTEESGEEGTNSEISSPPACRSPSPV. Spectrin repeat units lie at residues 5971–6080, 6081–6187, 6377–6488, 6489–6584, 6585–6694, 6695–6798, 6799–6905, 6906–7023, 7024–7131, 7132–7240, 7241–7353, 7354–7457, 7458–7561, 7562–7674, 7675–7786, 7787–7886, 7887–8000, 8001–8109, and 8110–8221; these read LERQ…LEEK, LSDQ…SLGE, RQSI…RLQQ, ILRF…RSSL, HQNL…LEMW, SHLD…TILK, HWTR…QEKL, HQLQ…LEGL, LESW…LTSA, LGQW…SKAL, LQLW…LQAG, VVDY…LQSF, LLQH…RGII, DSQI…LAFL, LKDW…NEWA, VFSE…LKET, LVAV…IEET, WRLW…LKHF, and ISQR…VRLP. A phosphoserine mark is found at Asp-8225 and Ser-8227. Residues 8237-8287 are disordered; sequence TALSDLRWQDPSADGMPSPQPSSNPSLSLPQPLRSERSGRDTPASVDSIPL. A compositionally biased stretch (low complexity) spans 8257 to 8269; the sequence is PSSNPSLSLPQPL. Thr-8278 is subject to Phosphothreonine. Phosphoserine is present on residues Ser-8281, Ser-8284, and Ser-8308. Spectrin repeat units follow at residues 8332–8440, 8441–8550, and 8551–8668; these read SSLE…MKQN, LQKW…LQDA, and LMQC…SSSQ. At Thr-8363 the chain carries Phosphothreonine. Positions 8673 to 8735 are disordered; it reads SWSSADELDT…SDSSRSDPRP (63 aa). Composition is skewed to polar residues over residues 8682 to 8698 and 8706 to 8718; these read TSGSVSPTSGRSTPNRQ and SLSQPGPSVSSPK. The span at 8721–8735 shows a compositional bias: basic and acidic residues; the sequence is STRDGSDSSRSDPRP. Residues 8740–8799 enclose the KASH domain; sequence RAFLFRILRAALPFQLLLLLLIGLTCLVPMSEKDYSCALSNNFARSFHPMLRYTNGPPPL. Residues 8749 to 8769 traverse the membrane as a helical; Anchor for type IV membrane protein segment; the sequence is AALPFQLLLLLLIGLTCLVPM. The Perinuclear space portion of the chain corresponds to 8770–8799; it reads SEKDYSCALSNNFARSFHPMLRYTNGPPPL.

It belongs to the nesprin family. As to quaternary structure, core component of LINC complexes which are composed of inner nuclear membrane SUN domain-containing proteins coupled to outer nuclear membrane KASH domain-containing nesprins. SUN and KASH domain-containing proteins seem to bind each other promiscuously; however, differentially expression of LINC complex constituents can give rise to specific assemblies. At least SUN1/2-containing core LINC complexes are proposed to be hexameric composed of three protomers of each KASH and SUN domain-containing protein. The SUN2:SYNE1/KASH1 LINC complex is a heterohexamer; the homotrimeric cloverleave-like conformation of the SUN domain is a prerequisite for LINC complex formation in which three separate SYNE1/KASH1 peptides bind at the interface of adjacent SUN domains. Self-associates. Interacts with SYNE3. Interacts with SUN3; proposed to form a spermatogenesis-specific LINC complex with SUN3 during sperm head formation. May interact with MUSK. Interacts with SPAG4/SUN4. Interacts with EMD and LMNA in vitro. Interacts with F-actin via its N-terminal domain. Interacts with DCTN1 and DYNC1I1/2; suggesting the association with the dynein-dynactin motor complex. Interacts (via KASH domain) with TMEM258. In terms of processing, the disulfid bond with SUN1 or SUN2 is required for stability of the respective LINC complex under tensile forces. In terms of tissue distribution, expressed in C2F3 and CH310T1/2 cells, brain and skeletal muscle (at protein level).

The protein resides in the nucleus outer membrane. It is found in the nucleus. Its subcellular location is the nucleus envelope. The protein localises to the cytoplasm. It localises to the cytoskeleton. The protein resides in the myofibril. It is found in the sarcomere. Functionally, multi-isomeric modular protein which forms a linking network between organelles and the actin cytoskeleton to maintain the subcellular spatial organization. As a component of the LINC (LInker of Nucleoskeleton and Cytoskeleton) complex involved in the connection between the nuclear lamina and the cytoskeleton. The nucleocytoplasmic interactions established by the LINC complex play an important role in the transmission of mechanical forces across the nuclear envelope and in nuclear movement and positioning. May be involved in nucleus-centrosome attachment. During interkinetic nuclear migration (INM) at G2 phase and nuclear migration in neural progenitors its LINC complex association with SUN1/2 and probably association with cytoplasmic dynein-dynactin motor complexes functions to pull the nucleus toward the centrosome; SYNE1 and SYNE2 seem to act redundantly in cerebellum, midbrain, brain stem, and other brain regions except cerebral cortex and hippocampus. Required for centrosome migration to the apical cell surface during early ciliogenesis. May be involved in nuclear remodeling during sperm head formation in spermatogenesis; a probable SUN3:SYNE1/KASH1 LINC complex may tether spermatid nuclei to posterior cytoskeletal structures such as the manchette. The chain is Nesprin-1 from Mus musculus (Mouse).